Reading from the N-terminus, the 437-residue chain is tRNA(Ile2) 2-agmatinylcytidine synthetase TiaS (437 aa).

It belongs to the TiaS family.

It is found in the cytoplasm. It catalyses the reaction cytidine(34) in tRNA(Ile2) + agmatine + ATP + H2O = 2-agmatinylcytidine(34) in tRNA(Ile2) + AMP + 2 phosphate + 2 H(+). Functionally, ATP-dependent agmatine transferase that catalyzes the formation of 2-agmatinylcytidine (agm2C) at the wobble position (C34) of tRNA(Ile2), converting the codon specificity from AUG to AUA. The protein is tRNA(Ile2) 2-agmatinylcytidine synthetase TiaS of Thermoplasma volcanium (strain ATCC 51530 / DSM 4299 / JCM 9571 / NBRC 15438 / GSS1).